Reading from the N-terminus, the 1550-residue chain is Cellulose synthase 1 (1550 aa).

The segment at 1–741 (MPEVRSSTQS…KERVLKGTVK (741 aa)) is catalytic. 3 helical membrane passes run 26 to 46 (GAGL…TSVT), 47 to 67 (LPPE…FIVG), and 106 to 126 (GLLG…LFLS). Residues 147–240 (EWPTVDIFVP…YILIFDCDHV (94 aa)) form a catalytic subdomain A region. Asp-189 is a catalytic residue. Substrate is bound by residues Asp-236 and Asp-238. The interval 317 to 377 (TAIEQIGGFA…GQRVRWARGM (61 aa)) is catalytic subdomain B. Asp-333 is an active-site residue. 5 helical membrane passes run 398–418 (LCYL…IFLS), 423–443 (FLFF…AYAI), 468–488 (VYET…LLSP), 507–527 (FDLG…GGLA), and 547–567 (LLNS…IAVG). The region spanning 572 to 647 (QKRNSHRIPA…PARIIRAGNG (76 aa)) is the PilZ domain. Disordered stretches follow at residues 711–734 (SSPT…RKER) and 768–813 (APAH…QPLA). The segment at 742 to 1550 (MVSLLALLTF…KQLEDERRKS (809 aa)) is cyclic di-GMP binding domain. Positions 768–796 (APAHQPEASDLPPLPALLPATSGAAQAGA) are enriched in low complexity. Residues 1513–1533 (VLLVGLLGCILIVSVLARALA) traverse the membrane as a helical segment.

This sequence in the N-terminal section; belongs to the glycosyltransferase 2 family. It in the C-terminal section; belongs to the AcsB/BcsB family. Requires Mg(2+) as cofactor.

It localises to the cell inner membrane. The catalysed reaction is [(1-&gt;4)-beta-D-glucosyl](n) + UDP-alpha-D-glucose = [(1-&gt;4)-beta-D-glucosyl](n+1) + UDP + H(+). The protein operates within glycan metabolism; bacterial cellulose biosynthesis. Activated by c-di-GMP. Bifunctional protein comprised of a catalytic subunit and a regulatory subunit. The catalytic subunit of cellulose synthase polymerizes uridine 5'-diphosphate glucose to cellulose in a processive way. The thick cellulosic mats generated by this enzyme probably provide a specialized protective environment to the bacterium. The regulatory subunit binds bis-(3'-5') cyclic diguanylic acid (c-di-GMP). This chain is Cellulose synthase 1 (acsAB), found in Komagataeibacter xylinus (Gluconacetobacter xylinus).